The chain runs to 274 residues: Cytochrome b-c1 complex subunit Rieske, mitochondrial (274 aa).

At 79-103 (SHTDVKVPDFYDYRRLEVLDSTKSS) the chain is on the mitochondrial matrix side. Residues 104–140 (RESSEARKGFSYLVTAVTTVGVAYAAKNAVTQFISSM) traverse the membrane as a helical segment. At 141-274 (SASADVLAMA…FTSDDMVVVG (134 aa)) the chain is on the mitochondrial intermembrane side. Positions 187 to 272 (EAAVELSQLR…YEFTSDDMVV (86 aa)) constitute a Rieske domain. Residues Cys-217, His-219, Cys-236, His-239, and Ser-241 each coordinate [2Fe-2S] cluster. Cys-222 and Cys-238 are oxidised to a cystine.

It belongs to the Rieske iron-sulfur protein family. As to quaternary structure, component of the ubiquinol-cytochrome c oxidoreductase (cytochrome b-c1 complex, complex III, CIII), a multisubunit enzyme composed of 11 subunits. The complex is composed of 3 respiratory subunits cytochrome b, cytochrome c1 and Rieske protein UQCRFS1, 2 core protein subunits UQCRC1/QCR1 and UQCRC2/QCR2, and 6 low-molecular weight protein subunits UQCRH/QCR6, UQCRB/QCR7, UQCRQ/QCR8, UQCR10/QCR9, UQCR11/QCR10 and subunit 9, the cleavage product of Rieske protein UQCRFS1. The complex exists as an obligatory dimer and forms supercomplexes (SCs) in the inner mitochondrial membrane with NADH-ubiquinone oxidoreductase (complex I, CI) and cytochrome c oxidase (complex IV, CIV), resulting in different assemblies (supercomplex SCI(1)III(2)IV(1) and megacomplex MCI(2)III(2)IV(2)). Incorporation of the Rieske protein UQCRFS1 is the penultimate step in complex III assembly. Interacts with TTC19, which is involved in the clearance of UQCRFS1 fragments. Component of the ubiquinol-cytochrome c oxidoreductase (cytochrome b-c1 complex, complex III, CIII). Subunit 9 corresponds to the mitochondrial targeting sequence (MTS) of Rieske protein UQCRFS1. It is retained after processing and incorporated inside complex III, where it remains bound to the complex and localizes between the 2 core subunits UQCRC1/QCR1 and UQCRC2/QCR2. The cofactor is [2Fe-2S] cluster. Proteolytic processing is necessary for the correct insertion of UQCRFS1 in the complex III dimer. Several fragments are generated during UQCRFS1 insertion, most probably due to the endogenous matrix-processing peptidase (MPP) activity of the 2 core protein subunits UQCRC1/QCR1 and UQCRC2/QCR2, which are homologous to the 2 mitochondrial-processing peptidase (MPP) subunits beta-MPP and alpha-MPP respectively. The action of the protease is also necessary for the clearance of the UQCRFS1 fragments.

The protein localises to the mitochondrion inner membrane. The catalysed reaction is a quinol + 2 Fe(III)-[cytochrome c](out) = a quinone + 2 Fe(II)-[cytochrome c](out) + 2 H(+)(out). Component of the ubiquinol-cytochrome c oxidoreductase, a multisubunit transmembrane complex that is part of the mitochondrial electron transport chain which drives oxidative phosphorylation. The respiratory chain contains 3 multisubunit complexes succinate dehydrogenase (complex II, CII), ubiquinol-cytochrome c oxidoreductase (cytochrome b-c1 complex, complex III, CIII) and cytochrome c oxidase (complex IV, CIV), that cooperate to transfer electrons derived from NADH and succinate to molecular oxygen, creating an electrochemical gradient over the inner membrane that drives transmembrane transport and the ATP synthase. The cytochrome b-c1 complex catalyzes electron transfer from ubiquinol to cytochrome c, linking this redox reaction to translocation of protons across the mitochondrial inner membrane, with protons being carried across the membrane as hydrogens on the quinol. In the process called Q cycle, 2 protons are consumed from the matrix, 4 protons are released into the intermembrane space and 2 electrons are passed to cytochrome c. The Rieske protein is a catalytic core subunit containing a [2Fe-2S] iron-sulfur cluster. It cycles between 2 conformational states during catalysis to transfer electrons from the quinol bound in the Q(0) site in cytochrome b to cytochrome c1. Incorporation of UQCRFS1 is the penultimate step in complex III assembly. Its function is as follows. Component of the ubiquinol-cytochrome c oxidoreductase (cytochrome b-c1 complex, complex III, CIII). UQCRFS1 undergoes proteolytic processing once it is incorporated in the complex III dimer. One of the fragments, called subunit 9, corresponds to its mitochondrial targeting sequence (MTS). The proteolytic processing is necessary for the correct insertion of UQCRFS1 in the complex III dimer, but the persistence of UQCRFS1-derived fragments may prevent newly imported UQCRFS1 to be processed and assembled into complex III and is detrimental for the complex III structure and function. The polypeptide is Cytochrome b-c1 complex subunit Rieske, mitochondrial (UQCRFS1) (Theropithecus gelada (Gelada baboon)).